Reading from the N-terminus, the 493-residue chain is Arginine decarboxylase (493 aa).

Lysine 229 is subject to N6-(pyridoxal phosphate)lysine.

It belongs to the Orn/Lys/Arg decarboxylase class-I family. It depends on pyridoxal 5'-phosphate as a cofactor.

The protein localises to the cytoplasm. It carries out the reaction L-arginine + H(+) = agmatine + CO2. The protein operates within amine and polyamine biosynthesis; agmatine biosynthesis; agmatine from L-arginine: step 1/1. Its function is as follows. Catalyzes the formation of agmatine from arginine. This Bacillus anthracis protein is Arginine decarboxylase (speA).